The chain runs to 161 residues: Afimbrial adhesin AFA-I (161 aa).

An N-terminal signal peptide occupies residues 1–21 (MKKLAIIGATSVMMMTGTAQA).

This sequence belongs to the Dr-adhesin family.

Its subcellular location is the fimbrium. Hemagglutinins of uropathogenic E.coli mediate adherence to the upper urinary tract. These adhesins bind to the Dr blood group antigen and also agglutinate human erythrocytes in the presence of D-mannose (mannose-resistant hemagglutination (MRHA)). The polypeptide is Afimbrial adhesin AFA-I (afaE1) (Escherichia coli).